Consider the following 525-residue polypeptide: GMP synthase [glutamine-hydrolyzing] (525 aa).

The Glutamine amidotransferase type-1 domain maps to 9-207 (RILILDFGSQ…ILDICGCEAL (199 aa)). The active-site Nucleophile is the Cys86. Catalysis depends on residues His181 and Glu183. In terms of domain architecture, GMPS ATP-PPase spans 208-400 (WTPSKIAEDA…LGLPYDMVYR (193 aa)). Residue 235–241 (SGGVDSS) participates in ATP binding.

In terms of assembly, homodimer.

It carries out the reaction XMP + L-glutamine + ATP + H2O = GMP + L-glutamate + AMP + diphosphate + 2 H(+). Its pathway is purine metabolism; GMP biosynthesis; GMP from XMP (L-Gln route): step 1/1. In terms of biological role, catalyzes the synthesis of GMP from XMP. In Pseudomonas syringae pv. syringae (strain B728a), this protein is GMP synthase [glutamine-hydrolyzing].